We begin with the raw amino-acid sequence, 363 residues long: MSVFRSVLGACVLLGSCASSLALAGGAEGLQRVKVDLVAPPLVHPHEQVVSGPPKVVQFRMSIEEKKMVIDDQGTTLQAMTFNGSMPGPTLVVHEGDYIELTLVNPATNSMPHNVDFHAATGALGGAGLTQVVPGQEVVLRFKADRSGTFVYHCAPQGMVPWHVVSGMNGALMVLPRDGLRDPQGKLLHYDRVYTIGESDLYIPKDKDGHYKDYPDLASSYQDTRAVMRTLTPSHVVFNGRVGALTGANALTSKVGESVLFIHSQANRDSRPHLIGGHGDWVWTTGKFANPPQRNMETWFIPGGSAVAALYTFKQPGTYVYLSHNLIEAMELGALAQIKVEGQWDDDLMTQVKAPGPIVEPKQ.

Residues 1–24 form the signal peptide; that stretch reads MSVFRSVLGACVLLGSCASSLALA. 2 Plastocyanin-like domains span residues 25–193 and 194–363; these read GGAE…YDRV and YTIG…EPKQ. Cu cation-binding residues include His113, His118, His153, Cys154, His163, Met168, and His324.

The protein belongs to the multicopper oxidase family. In terms of assembly, homotrimer. The cofactor is Cu(2+). Cu(+) is required as a cofactor. It depends on FAD as a cofactor.

It localises to the periplasm. It catalyses the reaction nitric oxide + Fe(III)-[cytochrome c] + H2O = Fe(II)-[cytochrome c] + nitrite + 2 H(+). It participates in nitrogen metabolism; nitrate reduction (denitrification); dinitrogen from nitrate: step 2/4. This chain is Copper-containing nitrite reductase (nirK), found in Pseudomonas chlororaphis (Pseudomonas aureofaciens).